A 163-amino-acid polypeptide reads, in one-letter code: Protein-export protein SecB (163 aa).

It belongs to the SecB family. As to quaternary structure, homotetramer, a dimer of dimers. One homotetramer interacts with 1 SecA dimer.

It is found in the cytoplasm. Functionally, one of the proteins required for the normal export of preproteins out of the cell cytoplasm. It is a molecular chaperone that binds to a subset of precursor proteins, maintaining them in a translocation-competent state. It also specifically binds to its receptor SecA. This is Protein-export protein SecB from Methylibium petroleiphilum (strain ATCC BAA-1232 / LMG 22953 / PM1).